The sequence spans 71 residues: uncharacterized protein (71 aa).

This is an uncharacterized protein from Dictyostelium discoideum (Social amoeba).